A 520-amino-acid polypeptide reads, in one-letter code: GMP synthase [glutamine-hydrolyzing] (520 aa).

Positions 9–202 (TVLIVDFGSQ…IHNIAGIKGD (194 aa)) constitute a Glutamine amidotransferase type-1 domain. Catalysis depends on C86, which acts as the Nucleophile. Residues H176 and E178 contribute to the active site. Residues 203–395 (WSMSAYRAKA…LGLPDSFIGR (193 aa)) enclose the GMPS ATP-PPase domain. 230 to 236 (SGGVDSS) is an ATP binding site.

In terms of assembly, homodimer.

The enzyme catalyses XMP + L-glutamine + ATP + H2O = GMP + L-glutamate + AMP + diphosphate + 2 H(+). Its pathway is purine metabolism; GMP biosynthesis; GMP from XMP (L-Gln route): step 1/1. Catalyzes the synthesis of GMP from XMP. In Rhizobium rhizogenes (strain K84 / ATCC BAA-868) (Agrobacterium radiobacter), this protein is GMP synthase [glutamine-hydrolyzing].